The sequence spans 242 residues: Endoglucanase (242 aa).

Residues 1–21 (MQVIVLPLVFLATFATSGSLA) form the signal peptide. Asp-47 functions as the Nucleophile in the catalytic mechanism. Residues Asn-79, Asn-103, and Asn-217 are each glycosylated (N-linked (GlcNAc...) asparagine).

The protein belongs to the glycosyl hydrolase 45 (cellulase K) family. Expressed in larval carcasses and gut, and adult gut.

Its subcellular location is the secreted. It catalyses the reaction Endohydrolysis of (1-&gt;4)-beta-D-glucosidic linkages in cellulose, lichenin and cereal beta-D-glucans.. This Phaedon cochleariae (Mustard beetle) protein is Endoglucanase.